We begin with the raw amino-acid sequence, 157 residues long: uncharacterized protein (157 aa).

Positions 9 to 147 (LLINYKTLDE…DFYVWHPEVN (139 aa)) constitute an N-acetyltransferase domain.

This is an uncharacterized protein from Bacillus cereus (strain 03BB102).